The primary structure comprises 369 residues: 3-isopropylmalate dehydrogenase (369 aa).

Substrate contacts are provided by R98, R108, R136, and D227. D227, D251, and D255 together coordinate Mg(2+). 290-302 serves as a coordination point for NAD(+); the sequence is GSAPDIAGKGIAN.

It belongs to the isocitrate and isopropylmalate dehydrogenases family. LeuB type 1 subfamily. As to quaternary structure, homodimer. The cofactor is Mg(2+). Requires Mn(2+) as cofactor.

Its subcellular location is the cytoplasm. It catalyses the reaction (2R,3S)-3-isopropylmalate + NAD(+) = 4-methyl-2-oxopentanoate + CO2 + NADH. Its pathway is amino-acid biosynthesis; L-leucine biosynthesis; L-leucine from 3-methyl-2-oxobutanoate: step 3/4. Its function is as follows. Catalyzes the oxidation of 3-carboxy-2-hydroxy-4-methylpentanoate (3-isopropylmalate) to 3-carboxy-4-methyl-2-oxopentanoate. The product decarboxylates to 4-methyl-2 oxopentanoate. This is 3-isopropylmalate dehydrogenase from Gluconobacter oxydans (strain 621H) (Gluconobacter suboxydans).